The chain runs to 317 residues: Zinc transporter ZIP3 (317 aa).

Topologically, residues 1 to 3 (MTK) are extracellular. The helical transmembrane segment at 4–24 (LLVAKVLCMVGVFFFMLLGSL) threads the bilayer. Over 25-42 (LPVKVIEADLEKAHRSKK) the chain is Cytoplasmic. A helical transmembrane segment spans residues 43 to 63 (VLSLCNTFGGGVFLATCFNAL). Over 64-85 (LPAVRDKLQQVLSLGHISTDYP) the chain is Extracellular. A helical membrane pass occupies residues 86 to 106 (LAETLMMVGFFLTVFVEQLVL). The Cytoplasmic segment spans residues 107–172 (TFRRERPPFI…RELGRPGPLR (66 aa)). Phosphoserine is present on residues S125 and S129. The chain crosses the membrane as a helical span at residues 173-193 (LLSLVFALSAHSVFEGLALGL). Over 194–199 (QEEGER) the chain is Extracellular. The helical transmembrane segment at 200–220 (VVSLFVGVAIHETLVAVALGI) threads the bilayer. At 221 to 232 (SMARSAVPLRDA) the chain is on the cytoplasmic side. The helical transmembrane segment at 233–253 (AKLAVTVSAMIPVGIGLGLGI) threads the bilayer. Topologically, residues 254–265 (ESARSVASSVAS) are extracellular. The chain crosses the membrane as a helical span at residues 266–286 (ALLQGLAGGTFLFVTFLEILA). Topologically, residues 287–294 (KELEERSE) are cytoplasmic. The helical transmembrane segment at 295–315 (QLLKVLFLVLGYAVLAGMVFL) threads the bilayer. The Extracellular segment spans residues 316–317 (KW).

It belongs to the ZIP transporter (TC 2.A.5) family. In terms of tissue distribution, highly expressed in the testes. Highly expressed in dentate gyrus granule cells of the hippocampus. Expressed in the mammary gland.

Its subcellular location is the cell membrane. The protein localises to the apical cell membrane. The enzyme catalyses Zn(2+)(in) = Zn(2+)(out). Transporter for the divalent cation Zn(2+). Mediates the influx of Zn(2+) into cells from extracellular space. Controls Zn(2+) accumulation into dentate gyrus granule cells in the hippocampus. Mediates Zn(2+) reuptake from the secreted milk within the alveolar lumen. The protein is Zinc transporter ZIP3 (Slc39a3) of Mus musculus (Mouse).